Here is a 64-residue protein sequence, read N- to C-terminus: Large ribosomal subunit protein bL35 (64 aa).

The tract at residues 19-44 (TGKLKASRPGRRHKLTGKTPKRKRQL) is disordered. Residues 23 to 44 (KASRPGRRHKLTGKTPKRKRQL) show a composition bias toward basic residues.

This sequence belongs to the bacterial ribosomal protein bL35 family.

This is Large ribosomal subunit protein bL35 from Protochlamydia amoebophila (strain UWE25).